A 327-amino-acid polypeptide reads, in one-letter code: Beta-ketoacyl-[acyl-carrier-protein] synthase III (327 aa).

Residues Cys-112 and His-253 contribute to the active site. An ACP-binding region spans residues 254 to 258; it reads QANER. Asn-283 is an active-site residue.

The protein belongs to the thiolase-like superfamily. FabH family. Homodimer.

It is found in the cytoplasm. The enzyme catalyses malonyl-[ACP] + acetyl-CoA + H(+) = 3-oxobutanoyl-[ACP] + CO2 + CoA. Its pathway is lipid metabolism; fatty acid biosynthesis. Catalyzes the condensation reaction of fatty acid synthesis by the addition to an acyl acceptor of two carbons from malonyl-ACP. Catalyzes the first condensation reaction which initiates fatty acid synthesis and may therefore play a role in governing the total rate of fatty acid production. Possesses both acetoacetyl-ACP synthase and acetyl transacylase activities. Its substrate specificity determines the biosynthesis of branched-chain and/or straight-chain of fatty acids. The sequence is that of Beta-ketoacyl-[acyl-carrier-protein] synthase III from Chlamydia trachomatis serovar A (strain ATCC VR-571B / DSM 19440 / HAR-13).